Reading from the N-terminus, the 208-residue chain is 3-demethoxyubiquinol 3-hydroxylase (208 aa).

Fe cation contacts are provided by E57, E87, H90, E139, E171, and H174.

The protein belongs to the COQ7 family. Fe cation serves as cofactor.

It is found in the cell membrane. The catalysed reaction is a 5-methoxy-2-methyl-3-(all-trans-polyprenyl)benzene-1,4-diol + AH2 + O2 = a 3-demethylubiquinol + A + H2O. Its pathway is cofactor biosynthesis; ubiquinone biosynthesis. Its function is as follows. Catalyzes the hydroxylation of 2-nonaprenyl-3-methyl-6-methoxy-1,4-benzoquinol during ubiquinone biosynthesis. This is 3-demethoxyubiquinol 3-hydroxylase from Nitrosomonas europaea (strain ATCC 19718 / CIP 103999 / KCTC 2705 / NBRC 14298).